The following is a 142-amino-acid chain: MPSVNEFFIFFLIVWHTCECVGIGFEHLHLVIYLNLNLQNVRFYLMKLINHLIIEKSSLHLLISTIHSFIDILLSDFKCNSSTRKCTTGMSVDISKIYTAEYGHLKAKLDTIGGLYCDSKDVTIMKVYVLVPLTIVLNIQVL.

Positions 1–20 (MPSVNEFFIFFLIVWHTCEC) are cleaved as a signal peptide. N80 is a glycosylation site (N-linked (GlcNAc...) asparagine).

This is an uncharacterized protein from Dictyostelium discoideum (Social amoeba).